The primary structure comprises 456 residues: Dolichyl-diphosphooligosaccharide--protein glycosyltransferase 48 kDa subunit (456 aa).

An N-terminal signal peptide occupies residues 1 to 42 (MGYFRCARAGSFGRRRKMEPSTAARAWALFWLLLPLLGAVCA). Residues 43–427 (SGPRTLVLLD…YERFIPSAYP (385 aa)) are Lumenal-facing. Residues 428–447 (YYASAFSMMLGLFIFSIVFL) form a helical membrane-spanning segment. The Cytoplasmic portion of the chain corresponds to 448–456 (HMKEKEKSD).

This sequence belongs to the DDOST 48 kDa subunit family. Component of the oligosaccharyltransferase (OST) complex. OST exists in two different complex forms which contain common core subunits RPN1, RPN2, OST48, OST4, DAD1 and TMEM258, either STT3A or STT3B as catalytic subunits, and form-specific accessory subunits. STT3A complex assembly occurs through the formation of 3 subcomplexes. Subcomplex 1 contains RPN1 and TMEM258, subcomplex 2 contains the STT3A-specific subunits STT3A, DC2/OSTC, and KCP2 as well as the core subunit OST4, and subcomplex 3 contains RPN2, DAD1, and OST48. The STT3A complex can form stable complexes with the Sec61 complex or with both the Sec61 and TRAP complexes. Interacts with SMIM22.

It localises to the endoplasmic reticulum membrane. The protein operates within protein modification; protein glycosylation. Its function is as follows. Subunit of the oligosaccharyl transferase (OST) complex that catalyzes the initial transfer of a defined glycan (Glc(3)Man(9)GlcNAc(2) in eukaryotes) from the lipid carrier dolichol-pyrophosphate to an asparagine residue within an Asn-X-Ser/Thr consensus motif in nascent polypeptide chains, the first step in protein N-glycosylation. N-glycosylation occurs cotranslationally and the complex associates with the Sec61 complex at the channel-forming translocon complex that mediates protein translocation across the endoplasmic reticulum (ER). All subunits are required for a maximal enzyme activity. Required for the assembly of both SST3A- and SS3B-containing OST complexes. This is Dolichyl-diphosphooligosaccharide--protein glycosyltransferase 48 kDa subunit from Homo sapiens (Human).